Reading from the N-terminus, the 428-residue chain is 3-phosphoshikimate 1-carboxyvinyltransferase (428 aa).

3-phosphoshikimate is bound by residues K22, S23, and R27. K22 contributes to the phosphoenolpyruvate binding site. Residues G96 and R124 each contribute to the phosphoenolpyruvate site. 7 residues coordinate 3-phosphoshikimate: S170, S171, Q172, S198, D314, N337, and K341. Q172 is a phosphoenolpyruvate binding site. D314 acts as the Proton acceptor in catalysis. 3 residues coordinate phosphoenolpyruvate: R345, R387, and K412.

This sequence belongs to the EPSP synthase family. Monomer.

Its subcellular location is the cytoplasm. It catalyses the reaction 3-phosphoshikimate + phosphoenolpyruvate = 5-O-(1-carboxyvinyl)-3-phosphoshikimate + phosphate. The protein operates within metabolic intermediate biosynthesis; chorismate biosynthesis; chorismate from D-erythrose 4-phosphate and phosphoenolpyruvate: step 6/7. Its function is as follows. Catalyzes the transfer of the enolpyruvyl moiety of phosphoenolpyruvate (PEP) to the 5-hydroxyl of shikimate-3-phosphate (S3P) to produce enolpyruvyl shikimate-3-phosphate and inorganic phosphate. The protein is 3-phosphoshikimate 1-carboxyvinyltransferase of Shewanella amazonensis (strain ATCC BAA-1098 / SB2B).